A 494-amino-acid polypeptide reads, in one-letter code: Ankyrin repeat domain-containing protein 33B (494 aa).

The tract at residues 1-80 (MVLLAGTGPE…SAESVPEGVP (80 aa)) is disordered. The span at 30-42 (VEEDPADYEEFED) shows a compositional bias: acidic residues. ANK repeat units follow at residues 84 to 113 (PETA…SVEE), 120 to 150 (NGRT…DVNW), 154 to 183 (EGNT…GLDL), 189 to 218 (FGFT…DVHA), and 223 to 255 (RGMS…PEQF). The disordered stretch occupies residues 349 to 494 (RAARGPQAQE…RRTAPWKKRT (146 aa)). Basic and acidic residues predominate over residues 371-382 (TGQEDADSREGS). Ser-405 carries the post-translational modification Phosphoserine. 2 stretches are compositionally biased toward basic and acidic residues: residues 440–451 (RPARKGSTKDSG) and 459–487 (RYKE…ERRT). Positions 459 to 488 (RYKEAKEEKRKAEEAEKKRQAEAQKERRTA) form a coiled coil.

This is Ankyrin repeat domain-containing protein 33B (ANKRD33B) from Homo sapiens (Human).